A 354-amino-acid chain; its full sequence is DNA polymerase IV (354 aa).

The UmuC domain occupies 7–188 (IIHVDMDCFF…LPLAKIPGVG (182 aa)). Residues Asp11 and Asp106 each contribute to the Mg(2+) site. Glu107 is a catalytic residue.

Belongs to the DNA polymerase type-Y family. Monomer. Mg(2+) is required as a cofactor.

The protein localises to the cytoplasm. It carries out the reaction DNA(n) + a 2'-deoxyribonucleoside 5'-triphosphate = DNA(n+1) + diphosphate. Functionally, poorly processive, error-prone DNA polymerase involved in untargeted mutagenesis. Copies undamaged DNA at stalled replication forks, which arise in vivo from mismatched or misaligned primer ends. These misaligned primers can be extended by PolIV. Exhibits no 3'-5' exonuclease (proofreading) activity. May be involved in translesional synthesis, in conjunction with the beta clamp from PolIII. The chain is DNA polymerase IV from Shigella boydii serotype 18 (strain CDC 3083-94 / BS512).